The chain runs to 430 residues: GTPase Obg (430 aa).

In terms of domain architecture, Obg spans 1-158 (MFVDQVKISL…LDVSLELKLL (158 aa)). Positions 118–145 (KGGRGGRGNSRFATPRNPAPDFSEKGEP) are disordered. The OBG-type G domain occupies 159–329 (ADVGLVGFPS…LLYAIADKLE (171 aa)). Residues 165 to 172 (GFPSVGKS), 190 to 194 (FTTIK), 212 to 215 (DLPG), 282 to 285 (NKMD), and 310 to 312 (STI) each bind GTP. Mg(2+) is bound by residues Ser172 and Thr192. The 79-residue stretch at 352–430 (KHTPSQDKFT…ILGGEFEFVE (79 aa)) folds into the OCT domain.

Belongs to the TRAFAC class OBG-HflX-like GTPase superfamily. OBG GTPase family. Monomer. Requires Mg(2+) as cofactor.

It localises to the cytoplasm. An essential GTPase which binds GTP, GDP and possibly (p)ppGpp with moderate affinity, with high nucleotide exchange rates and a fairly low GTP hydrolysis rate. Plays a role in control of the cell cycle, stress response, ribosome biogenesis and in those bacteria that undergo differentiation, in morphogenesis control. This chain is GTPase Obg, found in Staphylococcus aureus (strain Mu3 / ATCC 700698).